A 210-amino-acid polypeptide reads, in one-letter code: Probable glutathione peroxidase 8 (210 aa).

A helical transmembrane segment spans residues 21-40; that stretch reads VLLSMTVGVGCLLLLQTQLL.

It belongs to the glutathione peroxidase family.

It is found in the membrane. It carries out the reaction 2 glutathione + H2O2 = glutathione disulfide + 2 H2O. This is Probable glutathione peroxidase 8 (gpx8) from Tetraodon nigroviridis (Spotted green pufferfish).